A 358-amino-acid chain; its full sequence is Nicotinate-nucleotide--dimethylbenzimidazole phosphoribosyltransferase (358 aa).

Catalysis depends on Glu314, which acts as the Proton acceptor.

It belongs to the CobT family.

The enzyme catalyses 5,6-dimethylbenzimidazole + nicotinate beta-D-ribonucleotide = alpha-ribazole 5'-phosphate + nicotinate + H(+). It functions in the pathway nucleoside biosynthesis; alpha-ribazole biosynthesis; alpha-ribazole from 5,6-dimethylbenzimidazole: step 1/2. Its function is as follows. Catalyzes the synthesis of alpha-ribazole-5'-phosphate from nicotinate mononucleotide (NAMN) and 5,6-dimethylbenzimidazole (DMB). In Mycobacterium marinum (strain ATCC BAA-535 / M), this protein is Nicotinate-nucleotide--dimethylbenzimidazole phosphoribosyltransferase.